A 384-amino-acid chain; its full sequence is Dual-specificity RNA methyltransferase RlmN (384 aa).

The active-site Proton acceptor is Glu93. The region spanning 99–339 is the Radical SAM core domain; it reads EDTRGTLCVS…TTIRKTRGDD (241 aa). Cys106 and Cys344 are disulfide-bonded. Positions 113, 117, and 120 each coordinate [4Fe-4S] cluster. S-adenosyl-L-methionine contacts are provided by residues 170 to 171, Ser202, 224 to 226, and Asn301; these read GE and SLH. Cys344 functions as the S-methylcysteine intermediate in the catalytic mechanism.

It belongs to the radical SAM superfamily. RlmN family. Requires [4Fe-4S] cluster as cofactor.

It localises to the cytoplasm. The enzyme catalyses adenosine(2503) in 23S rRNA + 2 reduced [2Fe-2S]-[ferredoxin] + 2 S-adenosyl-L-methionine = 2-methyladenosine(2503) in 23S rRNA + 5'-deoxyadenosine + L-methionine + 2 oxidized [2Fe-2S]-[ferredoxin] + S-adenosyl-L-homocysteine. It catalyses the reaction adenosine(37) in tRNA + 2 reduced [2Fe-2S]-[ferredoxin] + 2 S-adenosyl-L-methionine = 2-methyladenosine(37) in tRNA + 5'-deoxyadenosine + L-methionine + 2 oxidized [2Fe-2S]-[ferredoxin] + S-adenosyl-L-homocysteine. Its function is as follows. Specifically methylates position 2 of adenine 2503 in 23S rRNA and position 2 of adenine 37 in tRNAs. m2A2503 modification seems to play a crucial role in the proofreading step occurring at the peptidyl transferase center and thus would serve to optimize ribosomal fidelity. The sequence is that of Dual-specificity RNA methyltransferase RlmN from Cupriavidus metallidurans (strain ATCC 43123 / DSM 2839 / NBRC 102507 / CH34) (Ralstonia metallidurans).